The primary structure comprises 233 residues: Fibrillarin-like rRNA/tRNA 2'-O-methyltransferase (233 aa).

S-adenosyl-L-methionine is bound by residues 90 to 91 (TT), 109 to 110 (EF), 134 to 135 (DA), and 154 to 157 (DVAQ).

It belongs to the methyltransferase superfamily. Fibrillarin family. As to quaternary structure, interacts with nop5. Component of box C/D small ribonucleoprotein (sRNP) particles that contain rpl7ae, FlpA and nop5, plus a guide RNA.

In terms of biological role, involved in pre-rRNA and tRNA processing. Utilizes the methyl donor S-adenosyl-L-methionine to catalyze the site-specific 2'-hydroxyl methylation of ribose moieties in rRNA and tRNA. Site specificity is provided by a guide RNA that base pairs with the substrate. Methylation occurs at a characteristic distance from the sequence involved in base pairing with the guide RNA. This chain is Fibrillarin-like rRNA/tRNA 2'-O-methyltransferase, found in Aeropyrum pernix (strain ATCC 700893 / DSM 11879 / JCM 9820 / NBRC 100138 / K1).